The following is a 305-amino-acid chain: Aspartate carbamoyltransferase catalytic subunit (305 aa).

2 residues coordinate carbamoyl phosphate: Arg58 and Thr59. Lys86 lines the L-aspartate pocket. Positions 108, 136, and 139 each coordinate carbamoyl phosphate. L-aspartate-binding residues include Arg169 and Arg223. Carbamoyl phosphate is bound by residues Gly264 and Pro265.

Belongs to the aspartate/ornithine carbamoyltransferase superfamily. ATCase family. In terms of assembly, heterododecamer (2C3:3R2) of six catalytic PyrB chains organized as two trimers (C3), and six regulatory PyrI chains organized as three dimers (R2).

It catalyses the reaction carbamoyl phosphate + L-aspartate = N-carbamoyl-L-aspartate + phosphate + H(+). It functions in the pathway pyrimidine metabolism; UMP biosynthesis via de novo pathway; (S)-dihydroorotate from bicarbonate: step 2/3. Functionally, catalyzes the condensation of carbamoyl phosphate and aspartate to form carbamoyl aspartate and inorganic phosphate, the committed step in the de novo pyrimidine nucleotide biosynthesis pathway. This is Aspartate carbamoyltransferase catalytic subunit from Syntrophobacter fumaroxidans (strain DSM 10017 / MPOB).